A 365-amino-acid chain; its full sequence is Pectate trisaccharide-lyase (365 aa).

Positions 1–25 (MRFSRVVSLVLLLVFTAVLTGAVKA) are cleaved as a signal peptide. Positions 142, 164, and 168 each coordinate Ca(2+). The stretch at 149–171 (SHHIWIDHCTFVNGNDGAVDIKK) is one PbH1 1 repeat. Residue Arg-222 is part of the active site. One copy of the PbH1 2 repeat lies at 261–287 (GAKVHVEGNYFMGYGAVMAEAGIAFLP).

Belongs to the polysaccharide lyase 1 family. Homotetramer. Ca(2+) serves as cofactor.

Its subcellular location is the secreted. The enzyme catalyses eliminative cleavage of unsaturated trigalacturonate as the major product from the reducing end of polygalacturonic acid/pectate.. Cleaves unsaturated trigalacturonate from pectin. Activity is highest towards polygalacturonic acid, activity on methylated pectins decreases with an increasing degree of methylation. This is Pectate trisaccharide-lyase from Thermotoga sp. (strain RQ2).